The sequence spans 113 residues: Beta-microseminoprotein (113 aa).

Positions 1–20 (MEAWLGSLLFLATMVIASKA) are cleaved as a signal peptide. 5 disulfides stabilise this stretch: cysteine 22–cysteine 69, cysteine 38–cysteine 61, cysteine 56–cysteine 92, cysteine 59–cysteine 68, and cysteine 83–cysteine 106.

It belongs to the beta-microseminoprotein family. As to quaternary structure, homodimer; Interacts with PI16.

It localises to the secreted. In Mus musculus (Mouse), this protein is Beta-microseminoprotein (Msmb).